Consider the following 439-residue polypeptide: Dolichyl-diphosphooligosaccharide--protein glycosyltransferase 48 kDa subunit (439 aa).

The signal sequence occupies residues 1–25; sequence MELGAAARAWSLLWLLLPLLGLVGA. Over 27 to 410 the chain is Lumenal; that stretch reads GPRTLVLLDN…YERFIPSAYP (384 aa). A helical transmembrane segment spans residues 411–430; the sequence is YYASAFSMMVGLFIFSVVFL. Over 431–439 the chain is Cytoplasmic; that stretch reads HMKEKEKSD.

Belongs to the DDOST 48 kDa subunit family. In terms of assembly, component of the oligosaccharyltransferase (OST) complex. OST exists in two different complex forms which contain common core subunits RPN1, RPN2, OST48, OST4, DAD1 and TMEM258, either STT3A or STT3B as catalytic subunits, and form-specific accessory subunits. STT3A complex assembly occurs through the formation of 3 subcomplexes. Subcomplex 1 contains RPN1 and TMEM258, subcomplex 2 contains the STT3A-specific subunits STT3A, DC2/OSTC, and KCP2 as well as the core subunit OST4, and subcomplex 3 contains RPN2, DAD1, and OST48. The STT3A complex can form stable complexes with the Sec61 complex or with both the Sec61 and TRAP complexes. Interacts with SMIM22.

It localises to the endoplasmic reticulum membrane. It functions in the pathway protein modification; protein glycosylation. Subunit of the oligosaccharyl transferase (OST) complex that catalyzes the initial transfer of a defined glycan (Glc(3)Man(9)GlcNAc(2) in eukaryotes) from the lipid carrier dolichol-pyrophosphate to an asparagine residue within an Asn-X-Ser/Thr consensus motif in nascent polypeptide chains, the first step in protein N-glycosylation. N-glycosylation occurs cotranslationally and the complex associates with the Sec61 complex at the channel-forming translocon complex that mediates protein translocation across the endoplasmic reticulum (ER). All subunits are required for a maximal enzyme activity. Required for the assembly of both SST3A- and SS3B-containing OST complexes. The polypeptide is Dolichyl-diphosphooligosaccharide--protein glycosyltransferase 48 kDa subunit (Sus scrofa (Pig)).